A 509-amino-acid chain; its full sequence is Acetyl-coenzyme A carboxylase carboxyl transferase subunit beta, chloroplastic (509 aa).

Residues 164–216 (HGSVCDGESHNSSEGESSSRRTHTKGVDLTIRESSNENERESSNENERKSSND) form a disordered region. 2 stretches are compositionally biased toward basic and acidic residues: residues 170–182 (GESH…ESSS) and 193–216 (TIRE…SSND). The CoA carboxyltransferase N-terminal domain occupies 226 to 509 (LWLQCENCYG…LNQNSNQVEC (284 aa)). Zn(2+)-binding residues include Cys230, Cys233, Cys249, and Cys252. The C4-type zinc finger occupies 230–252 (CENCYGLNYKKFLKSKMNICEQC). A disordered region spans residues 288–307 (FDSEGEQEQEQEQEQEEEET).

The protein belongs to the AccD/PCCB family. As to quaternary structure, acetyl-CoA carboxylase is a heterohexamer composed of biotin carboxyl carrier protein, biotin carboxylase and 2 subunits each of ACCase subunit alpha and ACCase plastid-coded subunit beta (accD). It depends on Zn(2+) as a cofactor.

The protein localises to the plastid. The protein resides in the chloroplast stroma. It carries out the reaction N(6)-carboxybiotinyl-L-lysyl-[protein] + acetyl-CoA = N(6)-biotinyl-L-lysyl-[protein] + malonyl-CoA. Its pathway is lipid metabolism; malonyl-CoA biosynthesis; malonyl-CoA from acetyl-CoA: step 1/1. Functionally, component of the acetyl coenzyme A carboxylase (ACC) complex. Biotin carboxylase (BC) catalyzes the carboxylation of biotin on its carrier protein (BCCP) and then the CO(2) group is transferred by the transcarboxylase to acetyl-CoA to form malonyl-CoA. The polypeptide is Acetyl-coenzyme A carboxylase carboxyl transferase subunit beta, chloroplastic (Ipomoea purpurea (Common morning glory)).